Reading from the N-terminus, the 156-residue chain is SsrA-binding protein (156 aa).

It belongs to the SmpB family.

The protein resides in the cytoplasm. Functionally, required for rescue of stalled ribosomes mediated by trans-translation. Binds to transfer-messenger RNA (tmRNA), required for stable association of tmRNA with ribosomes. tmRNA and SmpB together mimic tRNA shape, replacing the anticodon stem-loop with SmpB. tmRNA is encoded by the ssrA gene; the 2 termini fold to resemble tRNA(Ala) and it encodes a 'tag peptide', a short internal open reading frame. During trans-translation Ala-aminoacylated tmRNA acts like a tRNA, entering the A-site of stalled ribosomes, displacing the stalled mRNA. The ribosome then switches to translate the ORF on the tmRNA; the nascent peptide is terminated with the 'tag peptide' encoded by the tmRNA and targeted for degradation. The ribosome is freed to recommence translation, which seems to be the essential function of trans-translation. This chain is SsrA-binding protein, found in Clostridium perfringens (strain 13 / Type A).